Here is a 39-residue protein sequence, read N- to C-terminus: Omega-theraphotoxin-Asp1g (39 aa).

Intrachain disulfides connect C4–C25, C8–C31, and C17–C36.

Belongs to the neurotoxin 12 (Hwtx-2) family. 06 (TXP1) subfamily. Expressed by the venom gland.

It is found in the secreted. Functionally, inhibits voltage-gated calcium channels (Cav) in rat cerebellar granule cells. Has insecticidal activity. This chain is Omega-theraphotoxin-Asp1g, found in Aphonopelma sp. (American tarantula).